The following is a 556-amino-acid chain: Formate--tetrahydrofolate ligase (556 aa).

65-72 contacts ATP; the sequence is TPAGEGKS.

It belongs to the formate--tetrahydrofolate ligase family.

It catalyses the reaction (6S)-5,6,7,8-tetrahydrofolate + formate + ATP = (6R)-10-formyltetrahydrofolate + ADP + phosphate. The protein operates within one-carbon metabolism; tetrahydrofolate interconversion. The chain is Formate--tetrahydrofolate ligase from Clostridium novyi (strain NT).